A 260-amino-acid chain; its full sequence is Pro-thyrotropin-releasing hormone (260 aa).

Positions 1 to 24 (MPSIQLPVLLLCLTLSGVCLNGRQ) are cleaved as a signal peptide. Positions 72-112 (PQWLSKRQHPGKRYISDPEKRQHPGKRDVEEKASFGDIQKR) are disordered. Residue Gln-79 is modified to Pyrrolidone carboxylic acid. Pro-81 carries the post-translational modification Proline amide. The segment covering 85–112 (YISDPEKRQHPGKRDVEEKASFGDIQKR) has biased composition (basic and acidic residues). Residue Gln-93 is modified to Pyrrolidone carboxylic acid. Pro-95 carries the proline amide modification. At Gln-113 the chain carries Pyrrolidone carboxylic acid. At Leu-115 the chain carries Leucine amide. A Pyrrolidone carboxylic acid modification is found at Gln-134. The residue at position 136 (Pro-136) is a Proline amide. Gln-163 carries the pyrrolidone carboxylic acid modification. A Proline amide modification is found at Pro-165. Basic and acidic residues predominate over residues 195 to 207 (KHQQFGNRDRDSD). Disordered regions lie at residues 195 to 217 (KHQQFGNRDRDSDSPDYTGPCDL) and 238 to 260 (KEGVEEKHQHPGRRSAWENETEE). Gln-246 is subject to Pyrrolidone carboxylic acid. Proline amide is present on Pro-248.

This sequence belongs to the TRH family.

The protein resides in the secreted. Functionally, functions as a regulator of the biosynthesis of TSH in the anterior pituitary gland and as a neurotransmitter/ neuromodulator in the central and peripheral nervous systems. The polypeptide is Pro-thyrotropin-releasing hormone (TRH) (Gallus gallus (Chicken)).